A 110-amino-acid polypeptide reads, in one-letter code: Large ribosomal subunit protein uL22 (110 aa).

This sequence belongs to the universal ribosomal protein uL22 family. Part of the 50S ribosomal subunit.

Functionally, this protein binds specifically to 23S rRNA; its binding is stimulated by other ribosomal proteins, e.g. L4, L17, and L20. It is important during the early stages of 50S assembly. It makes multiple contacts with different domains of the 23S rRNA in the assembled 50S subunit and ribosome. Its function is as follows. The globular domain of the protein is located near the polypeptide exit tunnel on the outside of the subunit, while an extended beta-hairpin is found that lines the wall of the exit tunnel in the center of the 70S ribosome. The sequence is that of Large ribosomal subunit protein uL22 from Mycoplasmopsis pulmonis (strain UAB CTIP) (Mycoplasma pulmonis).